Here is a 212-residue protein sequence, read N- to C-terminus: Thymidylate kinase (212 aa).

Residues 16-21 (RAGKTT), arginine 97, arginine 182, and lysine 192 each bind ATP.

This sequence belongs to the thymidylate kinase family. Mg(2+) serves as cofactor.

It carries out the reaction dTMP + ATP = dTDP + ADP. Its pathway is pyrimidine metabolism; dTTP biosynthesis. In terms of biological role, catalyzes the phosphorylation of thymidine monophosphate (dTMP) to thymidine diphosphate (dTDP), the immediate precursor for the DNA building block dTTP, with ATP as the preferred phosphoryl donor in the presence of Mg(2+). The polypeptide is Thymidylate kinase (dtymk) (Danio rerio (Zebrafish)).